We begin with the raw amino-acid sequence, 92 residues long: Small ribosomal subunit protein uS19 (92 aa).

The tract at residues 72-92 is disordered; the sequence is GEFSPTRSFRGHAGAKNKGKK. The segment covering 80 to 92 has biased composition (basic residues); it reads FRGHAGAKNKGKK.

The protein belongs to the universal ribosomal protein uS19 family.

Its function is as follows. Protein S19 forms a complex with S13 that binds strongly to the 16S ribosomal RNA. This chain is Small ribosomal subunit protein uS19, found in Flavobacterium johnsoniae (strain ATCC 17061 / DSM 2064 / JCM 8514 / BCRC 14874 / CCUG 350202 / NBRC 14942 / NCIMB 11054 / UW101) (Cytophaga johnsonae).